Consider the following 142-residue polypeptide: Snaclec GPIB-binding protein subunit alpha (142 aa).

Disulfide bonds link Cys-6–Cys-17, Cys-39–Cys-136, and Cys-111–Cys-128. The region spanning His-13–Lys-137 is the C-type lectin domain.

Belongs to the snaclec family. Heterodimer of subunits alpha and beta; disulfide-linked. Expressed by the venom gland.

The protein resides in the secreted. Binds to platelet GPIb (subunit alpha) (GP1BA) and functions as a receptor blocker for vWF binding to GPIb. The platelet GPIb-binding site resides on the GPIB-BP subunit beta and not on the alpha subunit. At a final concentration of 104 nM totally abolishes vWF-dependent shear-induced platelet aggregation (SIPA) at a high shear stress, but had no effect on SIPA at a low shear stress. This is Snaclec GPIB-binding protein subunit alpha from Bothrops jararaca (Jararaca).